The sequence spans 598 residues: Leucine aminopeptidase 2, chloroplastic (598 aa).

A chloroplast-targeting transit peptide spans 1-71; it reads MATAASTSAA…GHRARMGHTA (71 aa). Residues Lys367 and Asp372 each contribute to the Mn(2+) site. Residue Lys379 is part of the active site. Residues Asp392, Asp452, and Glu454 each contribute to the Mn(2+) site. The active site involves Arg456.

It belongs to the peptidase M17 family. Homohexamer (dimer of homotrimers). Mn(2+) serves as cofactor.

It is found in the plastid. The protein localises to the chloroplast. It catalyses the reaction Release of an N-terminal amino acid, Xaa-|-Yaa-, in which Xaa is preferably Leu, but may be other amino acids including Pro although not Arg or Lys, and Yaa may be Pro. Amino acid amides and methyl esters are also readily hydrolyzed, but rates on arylamides are exceedingly low.. The enzyme catalyses Release of N-terminal proline from a peptide.. Presumably involved in the processing and regular turnover of intracellular proteins. Catalyzes the removal of unsubstituted N-terminal amino acids from various peptides. This Oryza sativa subsp. japonica (Rice) protein is Leucine aminopeptidase 2, chloroplastic.